Reading from the N-terminus, the 457-residue chain is tRNA modification GTPase MnmE (457 aa).

(6S)-5-formyl-5,6,7,8-tetrahydrofolate-binding residues include arginine 25, glutamate 87, and arginine 126. Positions 223–377 constitute a TrmE-type G domain; that stretch reads GISTAIIGRP…IEERINQLFF (155 aa). Asparagine 233 is a K(+) binding site. GTP is bound by residues 233 to 238, 252 to 258, and 277 to 280; these read NVGKSS, TDIAGTT, and DTAG. Serine 237 is a binding site for Mg(2+). Residues threonine 252, isoleucine 254, and threonine 257 each contribute to the K(+) site. Threonine 258 serves as a coordination point for Mg(2+). Lysine 457 provides a ligand contact to (6S)-5-formyl-5,6,7,8-tetrahydrofolate.

Belongs to the TRAFAC class TrmE-Era-EngA-EngB-Septin-like GTPase superfamily. TrmE GTPase family. Homodimer. Heterotetramer of two MnmE and two MnmG subunits. The cofactor is K(+).

It is found in the cytoplasm. Its function is as follows. Exhibits a very high intrinsic GTPase hydrolysis rate. Involved in the addition of a carboxymethylaminomethyl (cmnm) group at the wobble position (U34) of certain tRNAs, forming tRNA-cmnm(5)s(2)U34. This chain is tRNA modification GTPase MnmE, found in Streptococcus gordonii (strain Challis / ATCC 35105 / BCRC 15272 / CH1 / DL1 / V288).